We begin with the raw amino-acid sequence, 533 residues long: CTP synthase (533 aa).

An amidoligase domain region spans residues 1–269; sequence MKKNLKILVI…HEILSSKLNI (269 aa). Ser16 contributes to the CTP binding site. Ser16 contributes to the UTP binding site. Residues 17-22 and Asp73 each bind ATP; that span reads GIGKGV. Asp73 and Glu143 together coordinate Mg(2+). Residues 150-152, 190-195, and Lys226 each bind CTP; these read DME and KSKPTQ. UTP is bound by residues 190 to 195 and Lys226; that span reads KSKPTQ. The 230-residue stretch at 304-533 folds into the Glutamine amidotransferase type-1 domain; it reads YAELDDSYAS…LFLGLIKACI (230 aa). Gly355 serves as a coordination point for L-glutamine. The active-site Nucleophile; for glutamine hydrolysis is Cys382. Residues 383–386, Glu406, and Arg466 each bind L-glutamine; that span reads LGLQ. Residues His511 and Glu513 contribute to the active site.

It belongs to the CTP synthase family. As to quaternary structure, homotetramer.

The enzyme catalyses UTP + L-glutamine + ATP + H2O = CTP + L-glutamate + ADP + phosphate + 2 H(+). The catalysed reaction is L-glutamine + H2O = L-glutamate + NH4(+). It carries out the reaction UTP + NH4(+) + ATP = CTP + ADP + phosphate + 2 H(+). It participates in pyrimidine metabolism; CTP biosynthesis via de novo pathway; CTP from UDP: step 2/2. Allosterically activated by GTP, when glutamine is the substrate; GTP has no effect on the reaction when ammonia is the substrate. The allosteric effector GTP functions by stabilizing the protein conformation that binds the tetrahedral intermediate(s) formed during glutamine hydrolysis. Inhibited by the product CTP, via allosteric rather than competitive inhibition. Its function is as follows. Catalyzes the ATP-dependent amination of UTP to CTP with either L-glutamine or ammonia as the source of nitrogen. Regulates intracellular CTP levels through interactions with the four ribonucleotide triphosphates. The chain is CTP synthase from Borreliella burgdorferi (strain ATCC 35210 / DSM 4680 / CIP 102532 / B31) (Borrelia burgdorferi).